A 100-amino-acid chain; its full sequence is MISEERLLKVILAPHISEKSTVNAEKNNTVVFRVAIDATKAEVKAAVAQLFEVEVDSVRTLVNKGKTKRTGARVGRRSDWKKAYVTLAEGADIDFVGGAE.

This sequence belongs to the universal ribosomal protein uL23 family. Part of the 50S ribosomal subunit. Contacts protein L29, and trigger factor when it is bound to the ribosome.

Functionally, one of the early assembly proteins it binds 23S rRNA. One of the proteins that surrounds the polypeptide exit tunnel on the outside of the ribosome. Forms the main docking site for trigger factor binding to the ribosome. The protein is Large ribosomal subunit protein uL23 of Shewanella pealeana (strain ATCC 700345 / ANG-SQ1).